Consider the following 276-residue polypeptide: Hydroxymethylpyrimidine/phosphomethylpyrimidine kinase (276 aa).

Residue glutamine 45 coordinates 4-amino-5-hydroxymethyl-2-methylpyrimidine.

The protein belongs to the ThiD family.

It catalyses the reaction 4-amino-5-hydroxymethyl-2-methylpyrimidine + ATP = 4-amino-2-methyl-5-(phosphooxymethyl)pyrimidine + ADP + H(+). It carries out the reaction 4-amino-2-methyl-5-(phosphooxymethyl)pyrimidine + ATP = 4-amino-2-methyl-5-(diphosphooxymethyl)pyrimidine + ADP. It functions in the pathway cofactor biosynthesis; thiamine diphosphate biosynthesis; 4-amino-2-methyl-5-diphosphomethylpyrimidine from 5-amino-1-(5-phospho-D-ribosyl)imidazole: step 2/3. It participates in cofactor biosynthesis; thiamine diphosphate biosynthesis; 4-amino-2-methyl-5-diphosphomethylpyrimidine from 5-amino-1-(5-phospho-D-ribosyl)imidazole: step 3/3. In terms of biological role, catalyzes the phosphorylation of hydroxymethylpyrimidine phosphate (HMP-P) to HMP-PP, and of HMP to HMP-P. The polypeptide is Hydroxymethylpyrimidine/phosphomethylpyrimidine kinase (thiD) (Staphylococcus aureus (strain MRSA252)).